Here is a 72-residue protein sequence, read N- to C-terminus: Translational regulator CsrA (72 aa).

The protein belongs to the CsrA/RsmA family. In terms of assembly, homodimer; the beta-strands of each monomer intercalate to form a hydrophobic core, while the alpha-helices form wings that extend away from the core.

It is found in the cytoplasm. A translational regulator that binds mRNA to regulate translation initiation and/or mRNA stability. Usually binds in the 5'-UTR at or near the Shine-Dalgarno sequence preventing ribosome-binding, thus repressing translation. Its main target seems to be the major flagellin gene, while its function is anatagonized by FliW. The sequence is that of Translational regulator CsrA from Clostridium botulinum (strain Okra / Type B1).